Consider the following 488-residue polypeptide: Elongation factor Tu, chloroplastic (488 aa).

A disordered region spans residues 1–20; the sequence is MALSSTAATTSSKLKLSNPP. A chloroplast-targeting transit peptide spans 1 to 79; that stretch reads MALSSTAATT…RPSSSPFTVR (79 aa). One can recognise a tr-type G domain in the interval 89-293; that stretch reads KPHLNIGTIG…EVDKYIPIPQ (205 aa). Positions 98 to 105 are G1; that stretch reads GHVDHGKT. Residue 98–105 coordinates GTP; it reads GHVDHGKT. Residues 139-143 are G2; sequence GITIN. Positions 160-163 are G3; the sequence is DCPG. GTP contacts are provided by residues 160-164 and 215-218; these read DCPGH and NKQD. The G4 stretch occupies residues 215 to 218; sequence NKQD. Positions 253–255 are G5; it reads SAL.

Belongs to the TRAFAC class translation factor GTPase superfamily. Classic translation factor GTPase family. EF-Tu/EF-1A subfamily. As to expression, higher expression in leaves than in roots.

The protein localises to the plastid. The protein resides in the chloroplast. Its function is as follows. This protein promotes the GTP-dependent binding of aminoacyl-tRNA to the A-site of ribosomes during protein biosynthesis. The protein is Elongation factor Tu, chloroplastic (tufA) of Pisum sativum (Garden pea).